A 591-amino-acid chain; its full sequence is Myelin expression factor 2 (591 aa).

Positions Met-1–Arg-92 are disordered. Positions Glu-22 to Pro-36 are enriched in basic and acidic residues. Lys-44 is covalently cross-linked (Glycyl lysine isopeptide (Lys-Gly) (interchain with G-Cter in SUMO2)). 2 stretches are compositionally biased toward basic and acidic residues: residues Met-45–Thr-63 and Tyr-74–Gly-87. 2 consecutive RRM domains span residues Asn-91 to Asp-169 and Ser-224 to Lys-301. An omega-N-methylarginine mark is found at Arg-397 and Arg-417. At Ser-422 the chain carries Phosphoserine. Positions Asn-514 to Asn-590 constitute an RRM 3 domain.

Monomer. In terms of tissue distribution, highly expressed in the brain.

Its subcellular location is the nucleus. In terms of biological role, transcriptional repressor of the myelin basic protein gene (MBP). Binds to the proximal MB1 element 5'-TTGTCC-3' of the MBP promoter. Its binding to MB1 and function are inhibited by PURA. The chain is Myelin expression factor 2 (Myef2) from Mus musculus (Mouse).